We begin with the raw amino-acid sequence, 208 residues long: Ribosomal RNA small subunit methyltransferase G (208 aa).

S-adenosyl-L-methionine contacts are provided by residues G76, L81, 127 to 128 (VE), and R142.

This sequence belongs to the methyltransferase superfamily. RNA methyltransferase RsmG family.

The protein resides in the cytoplasm. It catalyses the reaction guanosine(527) in 16S rRNA + S-adenosyl-L-methionine = N(7)-methylguanosine(527) in 16S rRNA + S-adenosyl-L-homocysteine. Its function is as follows. Specifically methylates the N7 position of guanine in position 527 of 16S rRNA. The polypeptide is Ribosomal RNA small subunit methyltransferase G (Legionella pneumophila (strain Lens)).